The sequence spans 267 residues: 4,5-DOPA dioxygenase extradiol (267 aa).

Positions 9, 47, 168, and 222 each coordinate Zn(2+).

The protein belongs to the DODA-type extradiol aromatic ring-opening dioxygenase family. Requires Zn(2+) as cofactor. Fe(2+) is required as a cofactor. Expressed in petals. Not detected in leaves, stems and roots.

Its subcellular location is the cytoplasm. The catalysed reaction is L-dopa + O2 = 4-(L-alanin-3-yl)-2-hydroxy-cis,cis-muconate 6-semialdehyde + H(+). It participates in pigment biosynthesis; betalain biosynthesis. Its function is as follows. Opens the cyclic ring of dihydroxy-phenylalanine (DOPA) between carbons 4 and 5, thus producing an unstable seco-DOPA that rearranges nonenzymatically to betalamic acid. Produces mainly (S)-betalamic acid. Required for the coloration of flowers. The chain is 4,5-DOPA dioxygenase extradiol (DOD) from Mirabilis jalapa (Garden four-o'clock).